Consider the following 149-residue polypeptide: Large ribosomal subunit protein bL9 (149 aa).

It belongs to the bacterial ribosomal protein bL9 family.

In terms of biological role, binds to the 23S rRNA. This is Large ribosomal subunit protein bL9 from Bacillus pumilus (strain SAFR-032).